Reading from the N-terminus, the 304-residue chain is Ribosomal protein L11 methyltransferase (304 aa).

Positions 156, 177, 199, and 240 each coordinate S-adenosyl-L-methionine.

It belongs to the methyltransferase superfamily. PrmA family.

The protein resides in the cytoplasm. The catalysed reaction is L-lysyl-[protein] + 3 S-adenosyl-L-methionine = N(6),N(6),N(6)-trimethyl-L-lysyl-[protein] + 3 S-adenosyl-L-homocysteine + 3 H(+). In terms of biological role, methylates ribosomal protein L11. This is Ribosomal protein L11 methyltransferase from Symbiobacterium thermophilum (strain DSM 24528 / JCM 14929 / IAM 14863 / T).